A 346-amino-acid chain; its full sequence is Holliday junction branch migration complex subunit RuvB (346 aa).

A large ATPase domain (RuvB-L) region spans residues 1–181 (MSDRNPLIDA…FGIPVRLNFY (181 aa)). Residues leucine 20, arginine 21, glycine 62, lysine 65, threonine 66, threonine 67, 128-130 (EDF), arginine 171, tyrosine 181, and arginine 218 each bind ATP. Residue threonine 66 participates in Mg(2+) binding. The tract at residues 182-252 (TVEELEYIVR…IADEALSRLE (71 aa)) is small ATPAse domain (RuvB-S). The tract at residues 255–346 (NRGLDQLDRR…SQYGLFMEDE (92 aa)) is head domain (RuvB-H). DNA contacts are provided by arginine 291, arginine 310, and arginine 315.

It belongs to the RuvB family. Homohexamer. Forms an RuvA(8)-RuvB(12)-Holliday junction (HJ) complex. HJ DNA is sandwiched between 2 RuvA tetramers; dsDNA enters through RuvA and exits via RuvB. An RuvB hexamer assembles on each DNA strand where it exits the tetramer. Each RuvB hexamer is contacted by two RuvA subunits (via domain III) on 2 adjacent RuvB subunits; this complex drives branch migration. In the full resolvosome a probable DNA-RuvA(4)-RuvB(12)-RuvC(2) complex forms which resolves the HJ.

The protein resides in the cytoplasm. The catalysed reaction is ATP + H2O = ADP + phosphate + H(+). The RuvA-RuvB-RuvC complex processes Holliday junction (HJ) DNA during genetic recombination and DNA repair, while the RuvA-RuvB complex plays an important role in the rescue of blocked DNA replication forks via replication fork reversal (RFR). RuvA specifically binds to HJ cruciform DNA, conferring on it an open structure. The RuvB hexamer acts as an ATP-dependent pump, pulling dsDNA into and through the RuvAB complex. RuvB forms 2 homohexamers on either side of HJ DNA bound by 1 or 2 RuvA tetramers; 4 subunits per hexamer contact DNA at a time. Coordinated motions by a converter formed by DNA-disengaged RuvB subunits stimulates ATP hydrolysis and nucleotide exchange. Immobilization of the converter enables RuvB to convert the ATP-contained energy into a lever motion, pulling 2 nucleotides of DNA out of the RuvA tetramer per ATP hydrolyzed, thus driving DNA branch migration. The RuvB motors rotate together with the DNA substrate, which together with the progressing nucleotide cycle form the mechanistic basis for DNA recombination by continuous HJ branch migration. Branch migration allows RuvC to scan DNA until it finds its consensus sequence, where it cleaves and resolves cruciform DNA. The polypeptide is Holliday junction branch migration complex subunit RuvB (Brucella suis (strain ATCC 23445 / NCTC 10510)).